We begin with the raw amino-acid sequence, 371 residues long: Putative glutamate--cysteine ligase 2 (371 aa).

Belongs to the glutamate--cysteine ligase type 2 family. YbdK subfamily.

It catalyses the reaction L-cysteine + L-glutamate + ATP = gamma-L-glutamyl-L-cysteine + ADP + phosphate + H(+). Its function is as follows. ATP-dependent carboxylate-amine ligase which exhibits weak glutamate--cysteine ligase activity. This chain is Putative glutamate--cysteine ligase 2, found in Burkholderia multivorans (strain ATCC 17616 / 249).